A 206-amino-acid chain; its full sequence is Dephospho-CoA kinase (206 aa).

In terms of domain architecture, DPCK spans 4–204 (IVGLTGGIGS…QFYLQQAENK (201 aa)). 12–17 (GSGKTT) serves as a coordination point for ATP.

The protein belongs to the CoaE family.

The protein localises to the cytoplasm. It carries out the reaction 3'-dephospho-CoA + ATP = ADP + CoA + H(+). It participates in cofactor biosynthesis; coenzyme A biosynthesis; CoA from (R)-pantothenate: step 5/5. Its function is as follows. Catalyzes the phosphorylation of the 3'-hydroxyl group of dephosphocoenzyme A to form coenzyme A. The protein is Dephospho-CoA kinase of Haemophilus influenzae (strain 86-028NP).